The primary structure comprises 824 residues: Putative beta-glucuronidase (824 aa).

Residues Tyr26 to Tyr43 traverse the membrane as a helical segment. Residue Glu430 is the Proton donor of the active site.

It belongs to the glycosyl hydrolase 2 family.

Its subcellular location is the membrane. The enzyme catalyses a beta-D-glucuronoside + H2O = D-glucuronate + an alcohol. In terms of biological role, glycoside hydrolase that may be involved in ulvan degradation. Ulvan is the main polysaccharide component of the Ulvales (green seaweed) cell wall. It is composed of disaccharide building blocks comprising 3-sulfated rhamnose (Rha3S) linked to D-glucuronic acid (GlcA), L-iduronic acid (IduA), or D-xylose (Xyl). This is Putative beta-glucuronidase from Formosa agariphila (strain DSM 15362 / KCTC 12365 / LMG 23005 / KMM 3901 / M-2Alg 35-1).